A 459-amino-acid chain; its full sequence is ATP-dependent protease ATPase subunit HslU (459 aa).

ATP is bound by residues Val26, 68–73 (GVGKTE), Asp271, Glu337, and Arg409.

The protein belongs to the ClpX chaperone family. HslU subfamily. A double ring-shaped homohexamer of HslV is capped on each side by a ring-shaped HslU homohexamer. The assembly of the HslU/HslV complex is dependent on binding of ATP.

The protein resides in the cytoplasm. In terms of biological role, ATPase subunit of a proteasome-like degradation complex; this subunit has chaperone activity. The binding of ATP and its subsequent hydrolysis by HslU are essential for unfolding of protein substrates subsequently hydrolyzed by HslV. HslU recognizes the N-terminal part of its protein substrates and unfolds these before they are guided to HslV for hydrolysis. This Xylella fastidiosa (strain M12) protein is ATP-dependent protease ATPase subunit HslU.